The primary structure comprises 656 residues: CoB--CoM heterodisulfide reductase iron-sulfur subunit A 2 (656 aa).

152–175 (GGGVSGIQAALDLADMGFEVILVE) serves as a coordination point for FAD. 4Fe-4S ferredoxin-type domains are found at residues 238–269 (KKPR…FDEG), 286–315 (SVFT…FDQE), 577–606 (IVSE…LVEK), and 610–639 (LVAE…QNHF). Cysteine 248, cysteine 251, cysteine 254, cysteine 258, cysteine 295, cysteine 298, cysteine 301, cysteine 305, cysteine 586, cysteine 589, cysteine 592, cysteine 596, cysteine 619, cysteine 622, cysteine 625, and cysteine 629 together coordinate [4Fe-4S] cluster.

This sequence belongs to the HdrA family. In terms of assembly, the ferredoxin:CoB-CoM heterodisulfide reductase is composed of three subunits; HdrA, HdrB and HdrC. [4Fe-4S] cluster is required as a cofactor. Requires FAD as cofactor.

It functions in the pathway cofactor metabolism; coenzyme M-coenzyme B heterodisulfide reduction; coenzyme B and coenzyme M from coenzyme M-coenzyme B heterodisulfide: step 1/1. In terms of biological role, part of a complex that catalyzes the reversible reduction of CoM-S-S-CoB to the thiol-coenzymes H-S-CoM (coenzyme M) and H-S-CoB (coenzyme B). This chain is CoB--CoM heterodisulfide reductase iron-sulfur subunit A 2 (hdrA2), found in Methanopyrus kandleri (strain AV19 / DSM 6324 / JCM 9639 / NBRC 100938).